Consider the following 448-residue polypeptide: MSHRYIPLTEKDKQEMLQTIGAKSIGELFGDVPSDILLNRDLNIAEGEAETTLLRRLNRIASKNITKETHTSFLGAGVYDHYAPSVVDAMISRSEFYTAYTPYQPEISQGELQAIFEFQTLICELTDMDVANSSMYDGMTSFAEACILAFSQTKKNKIVVSKGLHYQALQVLHTYAKTRKEFEVVEIDLDGTVTDLKKLEAAVDDETAAVAVQYPNFYGSIEDLEKIHSFIEDKKALFIVYANPLALGLLTPPGSFGADIVVGDTQPFGIPAQFGGPHCGYFATTKKLMRKVPGRLVGQTQDDEGNRGFVLTLQAREQHIRRDKATSNICSNQALNALASSIAMSALGKQGIYDIAVQNIEHANYAKQQFIKKGFEVLDGTSFNEFVVKFDKPIQQVNEELVKYNIIGGFDLGVVSDDFKNHMLIAVTELRTKDEIDTFVEKAGELND.

Belongs to the GcvP family. N-terminal subunit subfamily. The glycine cleavage system is composed of four proteins: P, T, L and H. In this organism, the P 'protein' is a heterodimer of two subunits.

It carries out the reaction N(6)-[(R)-lipoyl]-L-lysyl-[glycine-cleavage complex H protein] + glycine + H(+) = N(6)-[(R)-S(8)-aminomethyldihydrolipoyl]-L-lysyl-[glycine-cleavage complex H protein] + CO2. The glycine cleavage system catalyzes the degradation of glycine. The P protein binds the alpha-amino group of glycine through its pyridoxal phosphate cofactor; CO(2) is released and the remaining methylamine moiety is then transferred to the lipoamide cofactor of the H protein. The sequence is that of Probable glycine dehydrogenase (decarboxylating) subunit 1 from Staphylococcus aureus (strain USA300).